A 336-amino-acid polypeptide reads, in one-letter code: Glyceraldehyde-3-phosphate dehydrogenase 1 (336 aa).

NAD(+)-binding positions include 12-13 (RI), Asp34, and Ser120. D-glyceraldehyde 3-phosphate is bound by residues 150-152 (SCT), Thr181, Arg198, 211-212 (TG), and Arg234. Catalysis depends on Cys151, which acts as the Nucleophile. Asn316 contributes to the NAD(+) binding site.

This sequence belongs to the glyceraldehyde-3-phosphate dehydrogenase family. Homotetramer.

Its subcellular location is the cytoplasm. The enzyme catalyses D-glyceraldehyde 3-phosphate + phosphate + NAD(+) = (2R)-3-phospho-glyceroyl phosphate + NADH + H(+). It participates in carbohydrate degradation; glycolysis; pyruvate from D-glyceraldehyde 3-phosphate: step 1/5. In terms of biological role, catalyzes the oxidative phosphorylation of glyceraldehyde 3-phosphate (G3P) to 1,3-bisphosphoglycerate (BPG) using the cofactor NAD. The first reaction step involves the formation of a hemiacetal intermediate between G3P and a cysteine residue, and this hemiacetal intermediate is then oxidized to a thioester, with concomitant reduction of NAD to NADH. The reduced NADH is then exchanged with the second NAD, and the thioester is attacked by a nucleophilic inorganic phosphate to produce BPG. The polypeptide is Glyceraldehyde-3-phosphate dehydrogenase 1 (gapA1) (Staphylococcus epidermidis (strain ATCC 35984 / DSM 28319 / BCRC 17069 / CCUG 31568 / BM 3577 / RP62A)).